Here is a 95-residue protein sequence, read N- to C-terminus: UPF0235 protein MS0322 (95 aa).

Belongs to the UPF0235 family.

The protein is UPF0235 protein MS0322 of Mannheimia succiniciproducens (strain KCTC 0769BP / MBEL55E).